We begin with the raw amino-acid sequence, 91 residues long: Small ribosomal subunit protein uS19 (91 aa).

This sequence belongs to the universal ribosomal protein uS19 family.

Its function is as follows. Protein S19 forms a complex with S13 that binds strongly to the 16S ribosomal RNA. The protein is Small ribosomal subunit protein uS19 of Azoarcus sp. (strain BH72).